The chain runs to 226 residues: Transcriptional regulatory protein DpiA (226 aa).

Positions 6–122 constitute a Response regulatory domain; that stretch reads TLLIVEDETP…RLGQTLTRFR (117 aa). Position 57 is a 4-aspartylphosphate (Asp-57). The H-T-H motif DNA-binding region spans 180-199; it reads AETVAQALTISRTTARRYLE.

Post-translationally, phosphorylated and activated by DpiB.

Its subcellular location is the cytoplasm. Functionally, member of the two-component regulatory system DpiA/DpiB, which is essential for expression of citrate-specific fermentation genes and genes involved in plasmid inheritance. Could be involved in response to both the presence of citrate and external redox conditions. The chain is Transcriptional regulatory protein DpiA (dpiA) from Escherichia coli O157:H7.